Consider the following 277-residue polypeptide: MGIRSFRPLTPGTRQAAISDFKEITKTEPEKSLTHHKHSKQGRNNRGVVTSRHRGGGHKRLYRIIDFRRDKRDIPAKVAAIEYDPNRNARIALLFYKDGEKRYIIAPAGLGVGDTVIAGENAPFEVGNALPLSRIPLGTEVHNIELVPGRGGQMVRAAGGFAQVVAKEGDYVTIRLPSKEVRMIRRECYATIGKVGNAEARNISLGKAGRTRHRGQRPHVRGSVMNPVDHPHGGGEGRAPIGRSGPMTPWGKPALGRKTRNKKKRSSDLIVRRRTQG.

2 disordered regions span residues 28-55 (EPEK…RHRG) and 207-277 (KAGR…RTQG). Basic residues-rich tracts occupy residues 34–43 (THHKHSKQGR), 209–220 (GRTRHRGQRPHV), and 255–265 (LGRKTRNKKKR).

It belongs to the universal ribosomal protein uL2 family. Part of the 50S ribosomal subunit. Forms a bridge to the 30S subunit in the 70S ribosome.

Its function is as follows. One of the primary rRNA binding proteins. Required for association of the 30S and 50S subunits to form the 70S ribosome, for tRNA binding and peptide bond formation. It has been suggested to have peptidyltransferase activity; this is somewhat controversial. Makes several contacts with the 16S rRNA in the 70S ribosome. This is Large ribosomal subunit protein uL2 from Microcystis aeruginosa (strain NIES-843 / IAM M-2473).